An 87-amino-acid polypeptide reads, in one-letter code: Putative regulatory protein syc0519_c (87 aa).

The protein belongs to the RemA family.

The chain is Putative regulatory protein syc0519_c from Synechococcus sp. (strain ATCC 27144 / PCC 6301 / SAUG 1402/1) (Anacystis nidulans).